The primary structure comprises 184 residues: Envelope protein 169 (184 aa).

The Intravirion segment spans residues 1–6 (MKKYIK). Residues 7 to 27 (MYLVLLIAIILFITILVIFLI) traverse the membrane as a helical segment. The Virion surface portion of the chain corresponds to 28-184 (SGLFYPEQNP…TVMAIPRKVL (157 aa)).

This sequence belongs to the asfivirus envelope protein p22 family.

It is found in the virion membrane. Its subcellular location is the host cell membrane. The sequence is that of Envelope protein 169 from Ornithodoros (relapsing fever ticks).